Here is a 278-residue protein sequence, read N- to C-terminus: Envelope glycoprotein L (278 aa).

Residues 1–30 form the signal peptide; sequence MCRRPDCGFSFSPGPVILLWCCLLLPIVSS. In terms of domain architecture, gL betaherpesvirus-type spans 43–256; it reads VPAECPELTR…DKYYAGLPPE (214 aa). C154 and C159 are oxidised to a cystine.

This sequence belongs to the herpesviridae glycoprotein L (gL) family. Betaherpesvirinae gL subfamily. Interacts with glycoprotein H (gH); this interaction is necessary for the correct processing and cell surface expression of gH. Forms the envelope pentamer complex (PC) composed of gH, gL, UL128, UL130, and UL131A. The pentamer interacts with host NRP2. Forms the envelope trimer complex composed of gH, gL, and gO. The trimer interacts with host PDGFRA. The trimer also interacts with host EPHA2.

The protein resides in the virion membrane. It is found in the host cell membrane. It localises to the host Golgi apparatus. Its subcellular location is the host trans-Golgi network. The heterodimer glycoprotein H-glycoprotein L is required for the fusion of viral and plasma membranes leading to virus entry into the host cell. Acts as a functional inhibitor of gH and maintains gH in an inhibited form. Upon binding to host integrins, gL dissociates from gH leading to activation of the viral fusion glycoproteins gB and gH. In human cytomegalovirus, forms two distincts complexes to mediate viral entry, a trimer and a pentamer at the surface of the virion envelope. The gH-gL-gO trimer is required for infection in fibroblasts by interacting with host PDGFRA, and in glioblastoma cells by interacting with host EPHA2. The gH-gL-UL128-UL130-UL131A pentamer is essential for viral entry in epithelial, endothelial and myeloid cells via interaction with host NRP2. This is Envelope glycoprotein L from Human cytomegalovirus (strain 5035) (HHV-5).